An 891-amino-acid chain; its full sequence is Alanine--tRNA ligase (891 aa).

Positions 564, 568, 681, and 685 each coordinate Zn(2+).

The protein belongs to the class-II aminoacyl-tRNA synthetase family. The cofactor is Zn(2+).

It is found in the cytoplasm. It catalyses the reaction tRNA(Ala) + L-alanine + ATP = L-alanyl-tRNA(Ala) + AMP + diphosphate. In terms of biological role, catalyzes the attachment of alanine to tRNA(Ala) in a two-step reaction: alanine is first activated by ATP to form Ala-AMP and then transferred to the acceptor end of tRNA(Ala). Also edits incorrectly charged Ser-tRNA(Ala) and Gly-tRNA(Ala) via its editing domain. The sequence is that of Alanine--tRNA ligase from Methylorubrum extorquens (strain PA1) (Methylobacterium extorquens).